Consider the following 241-residue polypeptide: DNA repair protein RecO (241 aa).

It belongs to the RecO family.

Its function is as follows. Involved in DNA repair and RecF pathway recombination. The sequence is that of DNA repair protein RecO from Yersinia enterocolitica serotype O:8 / biotype 1B (strain NCTC 13174 / 8081).